Here is a 138-residue protein sequence, read N- to C-terminus: Ribosome-binding factor A (138 aa).

A disordered region spans residues 112–138; sequence EARTQGQEPAADVEPAPGAAPDDEAEE. Low complexity predominate over residues 119–131; that stretch reads EPAADVEPAPGAA.

It belongs to the RbfA family. Monomer. Binds 30S ribosomal subunits, but not 50S ribosomal subunits or 70S ribosomes.

The protein localises to the cytoplasm. Its function is as follows. One of several proteins that assist in the late maturation steps of the functional core of the 30S ribosomal subunit. Associates with free 30S ribosomal subunits (but not with 30S subunits that are part of 70S ribosomes or polysomes). Required for efficient processing of 16S rRNA. May interact with the 5'-terminal helix region of 16S rRNA. The chain is Ribosome-binding factor A from Anaeromyxobacter dehalogenans (strain 2CP-C).